The following is a 225-amino-acid chain: Peptidyl-tRNA hydrolase (225 aa).

Y14 is a binding site for tRNA. Catalysis depends on H19, which acts as the Proton acceptor. Residues F64, N66, and N112 each coordinate tRNA. The tract at residues 187-225 (MQPPKPEKPKGEAKPAAPEAPEAAPDTRSALQRLADRFR) is disordered. Low complexity predominate over residues 200–210 (KPAAPEAPEAA).

The protein belongs to the PTH family. In terms of assembly, monomer.

Its subcellular location is the cytoplasm. The catalysed reaction is an N-acyl-L-alpha-aminoacyl-tRNA + H2O = an N-acyl-L-amino acid + a tRNA + H(+). Functionally, hydrolyzes ribosome-free peptidyl-tRNAs (with 1 or more amino acids incorporated), which drop off the ribosome during protein synthesis, or as a result of ribosome stalling. Catalyzes the release of premature peptidyl moieties from peptidyl-tRNA molecules trapped in stalled 50S ribosomal subunits, and thus maintains levels of free tRNAs and 50S ribosomes. In Cereibacter sphaeroides (strain ATCC 17025 / ATH 2.4.3) (Rhodobacter sphaeroides), this protein is Peptidyl-tRNA hydrolase.